Reading from the N-terminus, the 118-residue chain is D-dopachrome decarboxylase-B (118 aa).

At Pro-2 the chain carries N-acetylproline.

This sequence belongs to the MIF family. In terms of assembly, homotrimer.

The protein localises to the cytoplasm. The enzyme catalyses D-dopachrome + H(+) = 5,6-dihydroxyindole + CO2. Its function is as follows. Tautomerization of D-dopachrome with decarboxylation to give 5,6-dihydroxyindole (DHI). The polypeptide is D-dopachrome decarboxylase-B (ddt-b) (Xenopus laevis (African clawed frog)).